A 786-amino-acid chain; its full sequence is Cyclin-F (786 aa).

Positions 20 to 28 match the Nuclear localization signal 1 motif; sequence KRRIRRRPR. The F-box domain maps to 29–76; it reads NLTILSLPEDVLFHILKWLSVEDILAVRAVHSQLKDLVDNHASVWACA. The region spanning 288–405 is the Cyclin N-terminal domain; sequence QASQAVSKQQ…EIVSALEGKI (118 aa). 4 consecutive short sequence motifs (d box) follow at residues 310 to 313, 343 to 346, 349 to 352, and 351 to 354; these read RYIL, RRRL, RYRL, and RLQL. Disordered stretches follow at residues 564 to 593 and 675 to 738; these read SPSG…TAEL and TQIP…HTQP. Positions 568–574 match the Nuclear localization signal 2 motif; the sequence is RRTKRKR. Residues 582-766 are PEST; the sequence is RGSFVTTPTA…ESSVPQQQVK (185 aa). Residues 697–714 show a composition bias toward low complexity; that stretch reads VTTSGYSSVSTASPTSSV. A compositionally biased stretch (polar residues) spans 723–738; sequence QPTSVLSLDSDSHTQP. The D box 5 motif lies at 767 to 770; it reads RINL.

It belongs to the cyclin family. Cyclin AB subfamily. Component of the SCF(CCNF) complex consisting of CUL1, RBX1, SKP1 and CCNF. Interacts with SKP1. Interacts with CUL1. Interacts with CCNB1; interaction is required for nuclear localization of CCNB1. Interacts with CCP110; this interaction leads to CCP110 ubiquitination and degradation via the proteasome pathway. Interacts (via the Cyclin N-terminal domain) with MYBL2/BMYB. Interacts with FZR1/CDH1 (via N-terminus). Interacts with RRM2 (via Cy motif and when phosphorylated at 'Thr-33'); the interaction occurs exclusively in G2 and early M. Interacts with CDC6 (via Cy motif); the interaction takes place during G2 and M phase. In terms of processing, degraded when the spindle assembly checkpoint is activated during the G2-M transition. Degradation depends on the C-terminal PEST sequence. Phosphorylated just before cells enter into mitosis. Post-translationally, ubiquitinated by the anaphase-promoting complex (APC/C); leading to its degradation by the proteasome. As to expression, widely expressed, with expression detected in the heart, brain, placenta, lung, liver, skeletal muscle, kidney and pancreas.

The protein localises to the nucleus. It localises to the cytoplasm. Its subcellular location is the perinuclear region. It is found in the cytoskeleton. The protein resides in the microtubule organizing center. The protein localises to the centrosome. It localises to the centriole. Functionally, substrate recognition component of a SCF (SKP1-CUL1-F-box protein) E3 ubiquitin-protein ligase complex which mediates the ubiquitination and subsequent proteasomal degradation of target proteins. The SCF(CCNF) E3 ubiquitin-protein ligase complex is an integral component of the ubiquitin proteasome system (UPS) and links proteasome degradation to the cell cycle. Mediates the substrate recognition and the proteasomal degradation of various target proteins involved in the regulation of cell cycle progression and in the maintenance of genome stability. Mediates the ubiquitination and proteasomal degradation of CP110 during G2 phase, thereby acting as an inhibitor of centrosome reduplication. In G2, mediates the ubiquitination and subsequent degradation of ribonucleotide reductase RRM2, thereby maintaining a balanced pool of dNTPs and genome integrity. In G2, mediates the ubiquitination and proteasomal degradation of CDC6, thereby suppressing DNA re-replication and preventing genome instability. Involved in the ubiquitination and degradation of the substrate adapter CDH1 of the anaphase-promoting complex (APC/C), thereby acting as an antagonist of APC/C in regulating G1 progression and S phase entry. May play a role in the G2 cell cycle checkpoint control after DNA damage, possibly by promoting the ubiquitination of MYBL2/BMYB. The protein is Cyclin-F (CCNF) of Homo sapiens (Human).